Here is a 232-residue protein sequence, read N- to C-terminus: Translation initiation factor IF-3 (232 aa).

Disordered regions lie at residues 1-21 (MAIQ…RTNR) and 184-232 (LQSQ…AAQR). The segment covering 193–208 (AAAAAAPAAAPAAGAP) has biased composition (low complexity). Residues 209 to 222 (APTPAPAPAAPAPA) show a composition bias toward pro residues. Residues 223-232 (PAAADPAAQR) are compositionally biased toward low complexity.

Belongs to the IF-3 family. In terms of assembly, monomer.

Its subcellular location is the cytoplasm. Its function is as follows. IF-3 binds to the 30S ribosomal subunit and shifts the equilibrium between 70S ribosomes and their 50S and 30S subunits in favor of the free subunits, thus enhancing the availability of 30S subunits on which protein synthesis initiation begins. In Anaeromyxobacter sp. (strain K), this protein is Translation initiation factor IF-3.